Here is a 296-residue protein sequence, read N- to C-terminus: 4-hydroxybenzoate octaprenyltransferase (296 aa).

8 helical membrane passes run 28–48, 52–72, 102–122, 146–166, 169–189, 219–239, 241–261, and 275–295; these read PIGI…AAEG, LSHV…GCAI, ALIL…CTNA, YYPQ…TFTA, GELP…TVGY, VIIL…GARF, LGGW…WEFW, and FLHN…DYAL.

The protein belongs to the UbiA prenyltransferase family. It depends on Mg(2+) as a cofactor.

The protein localises to the cell inner membrane. The catalysed reaction is all-trans-octaprenyl diphosphate + 4-hydroxybenzoate = 4-hydroxy-3-(all-trans-octaprenyl)benzoate + diphosphate. The protein operates within cofactor biosynthesis; ubiquinone biosynthesis. Its function is as follows. Catalyzes the prenylation of para-hydroxybenzoate (PHB) with an all-trans polyprenyl group. Mediates the second step in the final reaction sequence of ubiquinone-8 (UQ-8) biosynthesis, which is the condensation of the polyisoprenoid side chain with PHB, generating the first membrane-bound Q intermediate 3-octaprenyl-4-hydroxybenzoate. The polypeptide is 4-hydroxybenzoate octaprenyltransferase (Pseudomonas fluorescens (strain ATCC BAA-477 / NRRL B-23932 / Pf-5)).